Consider the following 732-residue polypeptide: Catalase-peroxidase (732 aa).

The tract at residues 1–24 (MDAKTDDNSAGKCPVAHGSAGRTN) is disordered. A cross-link (tryptophyl-tyrosyl-methioninium (Trp-Tyr) (with M-245)) is located at residues 96–219 (WHSAGTYRIA…LGAVQMGLIY (124 aa)). Catalysis depends on H97, which acts as the Proton acceptor. Positions 219–245 (YVNPEGPNGNPDPLAAARDIRDTFARM) form a cross-link, tryptophyl-tyrosyl-methioninium (Tyr-Met) (with W-96). H260 lines the heme b pocket.

It belongs to the peroxidase family. Peroxidase/catalase subfamily. In terms of assembly, homodimer or homotetramer. Heme b serves as cofactor. Formation of the three residue Trp-Tyr-Met cross-link is important for the catalase, but not the peroxidase activity of the enzyme.

It carries out the reaction H2O2 + AH2 = A + 2 H2O. It catalyses the reaction 2 H2O2 = O2 + 2 H2O. Its function is as follows. Bifunctional enzyme with both catalase and broad-spectrum peroxidase activity. The polypeptide is Catalase-peroxidase (Mesorhizobium japonicum (strain LMG 29417 / CECT 9101 / MAFF 303099) (Mesorhizobium loti (strain MAFF 303099))).